Here is an 819-residue protein sequence, read N- to C-terminus: Serine/threonine-protein phosphatase 1 regulatory subunit 10 (819 aa).

In terms of domain architecture, TFIIS N-terminal spans 73-147 (KLLNNWLTYA…NDWMAVIRSQ (75 aa)). 3 disordered regions span residues 151 to 204 (QPAD…KFRS), 296 to 391 (KIKK…RKTV), and 495 to 785 (SVPD…GGDM). Composition is skewed to basic and acidic residues over residues 153-165 (ADKEKKKKKEDAK) and 173-190 (KTSEAKSEDNGDKKEKPK). The segment covering 305–327 (SPTSNKASPFDSKSPTEASSLTK) has biased composition (polar residues). The PP1-binding motif motif lies at 386–415 (KKRKTVSWPEESRLREYFYFELDETERVNV). Residues 495 to 504 (SVPDTPHEPD) show a composition bias toward basic and acidic residues. Composition is skewed to polar residues over residues 533-543 (MDQSTESQSPD) and 560-578 (MGSSKSPPNTLPGTMQEIL). Basic and acidic residues predominate over residues 589–604 (KPEDLMKQPDFSEKIK). Residues 606-618 (LLGSLQNQNQNQG) are compositionally biased toward low complexity. 2 stretches are compositionally biased toward pro residues: residues 635-663 (FPPPSQKNHQPPPPHHQPPPPHYPPPGPN) and 670-695 (HGPPGGPRMMGPPPPQRDGYWEPPPN). Composition is skewed to basic and acidic residues over residues 704–715 (HGGERGGMRGGD) and 758–777 (HGDHRGHEGHRGHGGHGDHR). A C3H1-type zinc finger spans residues 785–813 (MSTRPTCRHFMMKGNCRYENNCAFYHPGI).

In terms of assembly, component of the PNUTS-PP1 complex (also named PTW/PP1 complex).

It localises to the nucleus. The protein resides in the chromosome. Functionally, substrate-recognition component of the PNUTS-PP1 protein phosphatase complex, a protein phosphatase 1 (PP1) complex that promotes RNA polymerase II transcription pause-release, allowing transcription elongation. Promoter-proximal pausing by RNA polymerase II is a transcription halt following transcription initiation but prior to elongation, which acts as a checkpoint to control that transcripts are favorably configured for transcriptional elongation. The PNUTS-PP1 complex mediates the release of RNA polymerase II from promoter-proximal region of genes by catalyzing dephosphorylation of proteins involved in transcription. In some context, PPP1R10/PNUTS also acts as an inhibitor of protein phosphatase 1 (PP1) activity by preventing access to substrates. This chain is Serine/threonine-protein phosphatase 1 regulatory subunit 10 (ppp1r10), found in Xenopus laevis (African clawed frog).